The chain runs to 522 residues: Glucose-6-phosphate isomerase (522 aa).

The active-site Proton donor is Glu351. Active-site residues include His382 and Lys491.

This sequence belongs to the GPI family.

The protein localises to the cytoplasm. The enzyme catalyses alpha-D-glucose 6-phosphate = beta-D-fructose 6-phosphate. Its pathway is carbohydrate biosynthesis; gluconeogenesis. It participates in carbohydrate degradation; glycolysis; D-glyceraldehyde 3-phosphate and glycerone phosphate from D-glucose: step 2/4. Catalyzes the reversible isomerization of glucose-6-phosphate to fructose-6-phosphate. This is Glucose-6-phosphate isomerase from Albidiferax ferrireducens (strain ATCC BAA-621 / DSM 15236 / T118) (Rhodoferax ferrireducens).